The chain runs to 402 residues: Multidrug resistance protein MdtH (402 aa).

Transmembrane regions (helical) follow at residues 13–33 (YFLL…FPLI), 34–54 (SIRF…ALGL), 99–116 (PWVL…GTLF), 139–159 (LLMM…SWLL), 165–185 (LVCS…AWYL), 214–234 (VLTL…LPIM), 243–263 (AAVK…LYPI), 277–297 (LMAG…TSSL), 300–320 (LFTL…ARET), 340–360 (LGLA…FDAG), and 368–388 (LPWL…WWQF).

It belongs to the major facilitator superfamily. DHA1 family. MdtH (TC 2.A.1.2.21) subfamily.

Its subcellular location is the cell inner membrane. The chain is Multidrug resistance protein MdtH from Klebsiella pneumoniae (strain 342).